The sequence spans 700 residues: Endoglucanase A (700 aa).

The first 33 residues, 1-33, serve as a signal peptide directing secretion; sequence MKTRQRKRLFVSAALAVSLTMTVPMPASVNAAA. Glu-213 is a catalytic residue. The CBM3 domain occupies 550–700; that stretch reads NSDLVVQYKD…DGQLVWGIEP (151 aa).

The protein belongs to the glycosyl hydrolase 44 (cellulase J) family. Post-translationally, a short form (EG-A-S) arises from post-translational proteolysis of approximately 150 AA at the C-terminus of EG-A-L.

The enzyme catalyses Endohydrolysis of (1-&gt;4)-beta-D-glucosidic linkages in cellulose, lichenin and cereal beta-D-glucans.. The protein is Endoglucanase A (celA) of Paenibacillus lautus (Bacillus lautus).